Reading from the N-terminus, the 447-residue chain is Phosphoglucosamine mutase (447 aa).

S101 serves as the catalytic Phosphoserine intermediate. Mg(2+) is bound by residues S101, D242, D244, and D246. S101 is modified (phosphoserine).

Belongs to the phosphohexose mutase family. It depends on Mg(2+) as a cofactor. In terms of processing, activated by phosphorylation.

The catalysed reaction is alpha-D-glucosamine 1-phosphate = D-glucosamine 6-phosphate. Its function is as follows. Catalyzes the conversion of glucosamine-6-phosphate to glucosamine-1-phosphate. This is Phosphoglucosamine mutase from Azorhizobium caulinodans (strain ATCC 43989 / DSM 5975 / JCM 20966 / LMG 6465 / NBRC 14845 / NCIMB 13405 / ORS 571).